The primary structure comprises 750 residues: Photosystem I P700 chlorophyll a apoprotein A1 (750 aa).

Helical transmembrane passes span 70–93 (VFSAHFGQLSIIFLWLSGMYFHGA), 156–179 (LYCTAIGALVFAGLMLFAGWFHYH), 195–219 (LNHHLAGLLGLGSLSWAGHQVHVSL), 291–309 (IAHHHLAIAILFLIAGHMY), 346–369 (WHAQLSLNLAMLGSLTIVVAHHMY), 385–411 (LSLFTHHMWIGGFLIVGAAAHAAIFMV), 433–455 (AIISHLNWACIFLGFHSFGLYIH), and 531–549 (FLVHHIHAFTIHVTVLILL). Residues Cys573 and Cys582 each coordinate [4Fe-4S] cluster. A run of 2 helical transmembrane segments spans residues 589 to 610 (HVFLGLFWMYNAISVVIFHFSW) and 664 to 686 (LSAYGLFFLGAHFVWAFSLMFLF). Chlorophyll a' is bound at residue His675. Positions 683 and 691 each coordinate chlorophyll a. Trp692 contacts phylloquinone. Residues 724-744 (AVGVTHYLLGGIATTWAFFLA) traverse the membrane as a helical segment.

It belongs to the PsaA/PsaB family. The PsaA/B heterodimer binds the P700 chlorophyll special pair and subsequent electron acceptors. PSI consists of a core antenna complex that captures photons, and an electron transfer chain that converts photonic excitation into a charge separation. The eukaryotic PSI reaction center is composed of at least 11 subunits. P700 is a chlorophyll a/chlorophyll a' dimer, A0 is one or more chlorophyll a, A1 is one or both phylloquinones and FX is a shared 4Fe-4S iron-sulfur center. serves as cofactor.

It is found in the plastid. The protein resides in the chloroplast thylakoid membrane. It catalyses the reaction reduced [plastocyanin] + hnu + oxidized [2Fe-2S]-[ferredoxin] = oxidized [plastocyanin] + reduced [2Fe-2S]-[ferredoxin]. Its function is as follows. PsaA and PsaB bind P700, the primary electron donor of photosystem I (PSI), as well as the electron acceptors A0, A1 and FX. PSI is a plastocyanin-ferredoxin oxidoreductase, converting photonic excitation into a charge separation, which transfers an electron from the donor P700 chlorophyll pair to the spectroscopically characterized acceptors A0, A1, FX, FA and FB in turn. Oxidized P700 is reduced on the lumenal side of the thylakoid membrane by plastocyanin. The polypeptide is Photosystem I P700 chlorophyll a apoprotein A1 (Drimys granadensis).